The following is a 78-amino-acid chain: Toxin-like protein 10 (78 aa).

Residues 1-23 (MKATALLIAVFILFSVFGDMGYC) form the signal peptide.

Post-translationally, contains 4 disulfide bonds. Expressed by the venom gland.

The protein resides in the secreted. The chain is Toxin-like protein 10 from Urodacus yaschenkoi (Inland robust scorpion).